The chain runs to 200 residues: Protein GrpE (200 aa).

Residues M1–P27 show a composition bias toward basic and acidic residues. Residues M1–A50 are disordered. Positions M32–T41 are enriched in acidic residues.

It belongs to the GrpE family. Homodimer.

The protein localises to the cytoplasm. Its function is as follows. Participates actively in the response to hyperosmotic and heat shock by preventing the aggregation of stress-denatured proteins, in association with DnaK and GrpE. It is the nucleotide exchange factor for DnaK and may function as a thermosensor. Unfolded proteins bind initially to DnaJ; upon interaction with the DnaJ-bound protein, DnaK hydrolyzes its bound ATP, resulting in the formation of a stable complex. GrpE releases ADP from DnaK; ATP binding to DnaK triggers the release of the substrate protein, thus completing the reaction cycle. Several rounds of ATP-dependent interactions between DnaJ, DnaK and GrpE are required for fully efficient folding. This chain is Protein GrpE, found in Latilactobacillus sakei subsp. sakei (strain 23K) (Lactobacillus sakei subsp. sakei).